The following is a 192-amino-acid chain: Phosphoheptose isomerase (192 aa).

Positions 34–192 (VVDAYKAGNK…VERELFVKGK (159 aa)) constitute an SIS domain. Residue 49-51 (NGG) coordinates substrate. His58 and Glu62 together coordinate Zn(2+). Substrate is bound by residues Glu62, 91–92 (ND), 117–119 (STS), Ser122, and Gln169. Zn(2+)-binding residues include Gln169 and His177.

This sequence belongs to the SIS family. GmhA subfamily. Homotetramer. Zn(2+) is required as a cofactor.

Its subcellular location is the cytoplasm. The catalysed reaction is 2 D-sedoheptulose 7-phosphate = D-glycero-alpha-D-manno-heptose 7-phosphate + D-glycero-beta-D-manno-heptose 7-phosphate. The protein operates within carbohydrate biosynthesis; D-glycero-D-manno-heptose 7-phosphate biosynthesis; D-glycero-alpha-D-manno-heptose 7-phosphate and D-glycero-beta-D-manno-heptose 7-phosphate from sedoheptulose 7-phosphate: step 1/1. In terms of biological role, catalyzes the isomerization of sedoheptulose 7-phosphate in D-glycero-D-manno-heptose 7-phosphate. In Citrifermentans bemidjiense (strain ATCC BAA-1014 / DSM 16622 / JCM 12645 / Bem) (Geobacter bemidjiensis), this protein is Phosphoheptose isomerase.